The primary structure comprises 516 residues: Nondiscriminating glutamyl-tRNA synthetase EARS2, mitochondrial (516 aa).

The N-terminal 39 residues, 1-39, are a transit peptide targeting the mitochondrion; that stretch reads MRPAFIRGKWLSRTLELATGLGRRTCSSRESGREVRVRF. 38-40 contributes to the L-glutamate binding site; that stretch reads RFA. The 'HIGH' region signature appears at 43-51; the sequence is PTGFLHLGG. ATP is bound at residue His-48. Residues Glu-74, 226–230, and Arg-244 contribute to the L-glutamate site; that span reads YHLAN. ATP is bound by residues Glu-247 and 282–286; that span reads KLSKR. The 'KMSKS' region signature appears at 282–286; sequence KLSKR.

The protein belongs to the class-I aminoacyl-tRNA synthetase family. Glutamate--tRNA ligase type 1 subfamily.

Its subcellular location is the mitochondrion matrix. It carries out the reaction tRNA(Glx) + L-glutamate + ATP = L-glutamyl-tRNA(Glx) + AMP + diphosphate. The catalysed reaction is tRNA(Glu) + L-glutamate + ATP = L-glutamyl-tRNA(Glu) + AMP + diphosphate. The enzyme catalyses tRNA(Gln) + L-glutamate + ATP = L-glutamyl-tRNA(Gln) + AMP + diphosphate. Non-discriminating glutamyl-tRNA synthetase that catalyzes aminoacylation of both mitochondrial tRNA(Glu) and tRNA(Gln) and participates in RNA aminoacylation for mitochondrial protein translation. Attachs glutamate to tRNA(Glu) or tRNA(Gln) in a two-step reaction: glutamate is first activated by ATP to form Glu-AMP and then transferred to the acceptor end of tRNA(Glu) or tRNA(Gln). In Xenopus tropicalis (Western clawed frog), this protein is Nondiscriminating glutamyl-tRNA synthetase EARS2, mitochondrial.